The following is a 188-amino-acid chain: Putative manganese efflux pump MntP (188 aa).

6 helical membrane passes run 3-23, 39-59, 65-85, 104-124, 125-145, and 167-187; these read WLTILGISVALAMDAFAVALA, LGFHFGLFQALMPIGGWLLGM, ISAYDHWIAFGLLAYVGGRMV, GMTMVMLSVATSIDAFAVGLS, IAMLGVSVWLPATVIGLVAGV, and ICGGLVLCLIGLKILLEHTLL.

Belongs to the MntP (TC 9.B.29) family.

The protein resides in the cell inner membrane. Functionally, probably functions as a manganese efflux pump. The protein is Putative manganese efflux pump MntP of Citrifermentans bemidjiense (strain ATCC BAA-1014 / DSM 16622 / JCM 12645 / Bem) (Geobacter bemidjiensis).